The chain runs to 203 residues: Chromophore lyase CpcT/CpeT 3 (203 aa).

The protein belongs to the CpcT/CpeT biliprotein lyase family.

Its function is as follows. Covalently attaches a chromophore to Cys residue(s) of phycobiliproteins. This Gloeobacter violaceus (strain ATCC 29082 / PCC 7421) protein is Chromophore lyase CpcT/CpeT 3.